A 627-amino-acid chain; its full sequence is Signal recognition particle subunit SRP68 (627 aa).

The segment at 1 to 53 (MAAEKQVPGGGGGGGSGGGGGSGGGGSGGGRGAGGEENKENERPSAGSKANKE) is disordered. The span at 8-33 (PGGGGGGGSGGGGGSGGGGSGGGRGA) shows a compositional bias: gly residues. A compositionally biased stretch (basic and acidic residues) spans 34–43 (GGEENKENER). Ser48 and Ser241 each carry phosphoserine. Positions 52–252 (KEFGDSLSLE…NIRYCAYNIG (201 aa)) are RNA-binding. Lys452 is subject to N6-acetyllysine. The required for interaction with SRP72 stretch occupies residues 588–610 (PLFFDLALNHVAFPPLEDKLEQK).

Belongs to the SRP68 family. In terms of assembly, heterodimer with SRP72. SRP68/SRP72 heterodimer formation is stabilized by the presence of 7SL RNA. Component of a signal recognition particle (SRP) complex that consists of a 7SL RNA molecule of 300 nucleotides and six protein subunits: SRP72, SRP68, SRP54, SRP19, SRP14 and SRP9. Within the SRP complex, interacts (via C-terminus) with SRP72 (via N-terminus).

It is found in the cytoplasm. The protein resides in the nucleus. The protein localises to the nucleolus. It localises to the endoplasmic reticulum. Component of the signal recognition particle (SRP) complex, a ribonucleoprotein complex that mediates the cotranslational targeting of secretory and membrane proteins to the endoplasmic reticulum (ER). The SRP complex interacts with the signal sequence in nascent secretory and membrane proteins and directs them to the membrane of the ER. The SRP complex targets the ribosome-nascent chain complex to the SRP receptor (SR), which is anchored in the ER, where SR compaction and GTPase rearrangement drive cotranslational protein translocation into the ER. Binds the signal recognition particle RNA (7SL RNA), SRP72 binds to this complex subsequently. The SRP complex possibly participates in the elongation arrest function. This Homo sapiens (Human) protein is Signal recognition particle subunit SRP68 (SRP68).